Reading from the N-terminus, the 745-residue chain is Polyribonucleotide nucleotidyltransferase (745 aa).

Mg(2+)-binding residues include Asp487 and Asp493. Residues 554–613 (PRIETMQIPTDKIRDVIGTGGKIIREIVEKTGAKINIEDTGVVKIASSDGKAIKAAYNWI) form the KH domain. Positions 623-691 (GTIYDGTIVK…ERGKIRLSMK (69 aa)) constitute an S1 motif domain. The segment at 695–745 (QETGEDITEKLKAERAERGEPEREERSDRGDRGDRGPRRDRGERRRESSGE) is disordered. Over residues 701–745 (ITEKLKAERAERGEPEREERSDRGDRGDRGPRRDRGERRRESSGE) the composition is skewed to basic and acidic residues.

It belongs to the polyribonucleotide nucleotidyltransferase family. The cofactor is Mg(2+).

It localises to the cytoplasm. The enzyme catalyses RNA(n+1) + phosphate = RNA(n) + a ribonucleoside 5'-diphosphate. Functionally, involved in mRNA degradation. Catalyzes the phosphorolysis of single-stranded polyribonucleotides processively in the 3'- to 5'-direction. The sequence is that of Polyribonucleotide nucleotidyltransferase from Methylorubrum populi (strain ATCC BAA-705 / NCIMB 13946 / BJ001) (Methylobacterium populi).